The following is a 323-amino-acid chain: MQTIPLPIRPTAGRWRTADVVALYELPFPELLHRAQSVHREHFDATEIQLSSLLSIKTGGCPEDCGYCSQSARHDSGLAAEKLMPLDEVLAEARAAKNAGAQRFCMGAAWRSPKPHHLEAVAEMVREVKALGLETCVTLGMLQDGQAEQLKEAGLDYYNHNLDTSPEFYGNVVTTRGYQDRLDTLARVRNAGIHVCCGGIIGMGESRRDRASLIAQLANMEPYPESVPINHLVPIPGTPLAEAAPVDVFEFIRTIAVARITMPRAKVRLSAGRQSMSEAEQALCLLAGANSIFYGASLLTTGNPQVQADRALMSKLGMRPETV.

The Radical SAM core domain maps to 46–264; the sequence is TEIQLSSLLS…IAVARITMPR (219 aa). Cys-61, Cys-65, and Cys-68 together coordinate [4Fe-4S] cluster. The [2Fe-2S] cluster site is built by Cys-105, Cys-136, Cys-196, and Arg-268.

This sequence belongs to the radical SAM superfamily. Biotin synthase family. Homodimer. Requires [4Fe-4S] cluster as cofactor. [2Fe-2S] cluster is required as a cofactor.

The catalysed reaction is (4R,5S)-dethiobiotin + (sulfur carrier)-SH + 2 reduced [2Fe-2S]-[ferredoxin] + 2 S-adenosyl-L-methionine = (sulfur carrier)-H + biotin + 2 5'-deoxyadenosine + 2 L-methionine + 2 oxidized [2Fe-2S]-[ferredoxin]. Its pathway is cofactor biosynthesis; biotin biosynthesis; biotin from 7,8-diaminononanoate: step 2/2. In terms of biological role, catalyzes the conversion of dethiobiotin (DTB) to biotin by the insertion of a sulfur atom into dethiobiotin via a radical-based mechanism. The polypeptide is Biotin synthase (Bordetella avium (strain 197N)).